We begin with the raw amino-acid sequence, 362 residues long: uncharacterized protein (362 aa).

This sequence belongs to the carbohydrate kinase PfkB family.

This is an uncharacterized protein from Escherichia coli (strain K12).